The primary structure comprises 156 residues: Small ribosomal subunit protein uS7 (156 aa).

This sequence belongs to the universal ribosomal protein uS7 family. In terms of assembly, part of the 30S ribosomal subunit. Contacts proteins S9 and S11.

Its function is as follows. One of the primary rRNA binding proteins, it binds directly to 16S rRNA where it nucleates assembly of the head domain of the 30S subunit. Is located at the subunit interface close to the decoding center, probably blocks exit of the E-site tRNA. The polypeptide is Small ribosomal subunit protein uS7 (Heliobacterium modesticaldum (strain ATCC 51547 / Ice1)).